A 28-amino-acid polypeptide reads, in one-letter code: Dermaseptin-1 (28 aa).

At glutamine 28 the chain carries Glutamine amide.

Expressed by the skin glands.

The protein localises to the secreted. In terms of biological role, has antimicrobial activity. This chain is Dermaseptin-1, found in Phyllomedusa tomopterna (Tiger-striped leaf frog).